Reading from the N-terminus, the 140-residue chain is Peptide methionine sulfoxide reductase MsrB (140 aa).

The 123-residue stretch at 9 to 131 folds into the MsrB domain; the sequence is DALWREKLTP…NSASIVLDSE (123 aa). 4 residues coordinate Zn(2+): Cys-48, Cys-51, Cys-97, and Cys-100. Cys-120 functions as the Nucleophile in the catalytic mechanism.

It belongs to the MsrB Met sulfoxide reductase family. Requires Zn(2+) as cofactor.

The enzyme catalyses L-methionyl-[protein] + [thioredoxin]-disulfide + H2O = L-methionyl-(R)-S-oxide-[protein] + [thioredoxin]-dithiol. The chain is Peptide methionine sulfoxide reductase MsrB from Cellvibrio japonicus (strain Ueda107) (Pseudomonas fluorescens subsp. cellulosa).